We begin with the raw amino-acid sequence, 118 residues long: Small ribosomal subunit protein uS13 (118 aa).

Positions 92-118 (RKGLPVRGQRTKTNARTRKGPRKPIRK) are disordered.

Belongs to the universal ribosomal protein uS13 family. Part of the 30S ribosomal subunit. Forms a loose heterodimer with protein S19. Forms two bridges to the 50S subunit in the 70S ribosome.

In terms of biological role, located at the top of the head of the 30S subunit, it contacts several helices of the 16S rRNA. In the 70S ribosome it contacts the 23S rRNA (bridge B1a) and protein L5 of the 50S subunit (bridge B1b), connecting the 2 subunits; these bridges are implicated in subunit movement. Contacts the tRNAs in the A and P-sites. The sequence is that of Small ribosomal subunit protein uS13 from Pseudomonas putida (strain W619).